A 620-amino-acid chain; its full sequence is Membrane protein insertase YidC (620 aa).

A helical membrane pass occupies residues asparagine 7–methionine 27. Over residues alanine 37–alanine 58 the composition is skewed to low complexity. The disordered stretch occupies residues alanine 37 to aspartate 77. 4 helical membrane passes run phenylalanine 399–serine 419, tryptophan 469–isoleucine 489, leucine 514–isoleucine 534, and tryptophan 560–tryptophan 580.

The protein belongs to the OXA1/ALB3/YidC family. Type 1 subfamily. As to quaternary structure, interacts with the Sec translocase complex via SecD. Specifically interacts with transmembrane segments of nascent integral membrane proteins during membrane integration.

The protein localises to the cell inner membrane. Required for the insertion and/or proper folding and/or complex formation of integral membrane proteins into the membrane. Involved in integration of membrane proteins that insert both dependently and independently of the Sec translocase complex, as well as at least some lipoproteins. Aids folding of multispanning membrane proteins. This Allorhizobium ampelinum (strain ATCC BAA-846 / DSM 112012 / S4) (Agrobacterium vitis (strain S4)) protein is Membrane protein insertase YidC.